Reading from the N-terminus, the 360-residue chain is Probable neutral protease 2 homolog A (360 aa).

The N-terminal stretch at 1–17 (MQFTALLAALGAPLALA) is a signal peptide. A propeptide spanning residues 18 to 183 (ASIPAAAHNH…DDSTGVIDKR (166 aa)) is cleaved from the precursor. 3 disulfide bridges follow: Cys191-Cys262, Cys269-Cys287, and Cys300-Cys360. Asn205 carries N-linked (GlcNAc...) asparagine glycosylation. A Zn(2+)-binding site is contributed by His311. The active site involves Glu312. The Zn(2+) site is built by His315 and Asp326.

This sequence belongs to the peptidase M35 family. It depends on Zn(2+) as a cofactor.

It is found in the secreted. The catalysed reaction is Preferential cleavage of bonds with hydrophobic residues in P1'. Also 3-Asn-|-Gln-4 and 8-Gly-|-Ser-9 bonds in insulin B chain.. Its function is as follows. Probable secreted metalloprotease that shows high activities on basic nuclear substrates such as histone and protamine. May be involved in virulence. This is Probable neutral protease 2 homolog A (NpII-A) from Trichophyton rubrum (Athlete's foot fungus).